The following is a 198-amino-acid chain: ATP-dependent Clp protease proteolytic subunit (198 aa).

The active-site Nucleophile is serine 98. The active site involves histidine 123.

It belongs to the peptidase S14 family. As to quaternary structure, fourteen ClpP subunits assemble into 2 heptameric rings which stack back to back to give a disk-like structure with a central cavity, resembling the structure of eukaryotic proteasomes.

It is found in the cytoplasm. The enzyme catalyses Hydrolysis of proteins to small peptides in the presence of ATP and magnesium. alpha-casein is the usual test substrate. In the absence of ATP, only oligopeptides shorter than five residues are hydrolyzed (such as succinyl-Leu-Tyr-|-NHMec, and Leu-Tyr-Leu-|-Tyr-Trp, in which cleavage of the -Tyr-|-Leu- and -Tyr-|-Trp bonds also occurs).. Cleaves peptides in various proteins in a process that requires ATP hydrolysis. Has a chymotrypsin-like activity. Plays a major role in the degradation of misfolded proteins. This chain is ATP-dependent Clp protease proteolytic subunit, found in Bacillus velezensis (strain DSM 23117 / BGSC 10A6 / LMG 26770 / FZB42) (Bacillus amyloliquefaciens subsp. plantarum).